Here is a 506-residue protein sequence, read N- to C-terminus: MATELNPKNFPVLSYVLDRLPSFTAKSSSSSDVEPPPSKSDPSSSSNHSIEIVTQMPHLAHPDVLASMTNATADVSQTRSVLRTLGPRPDHETVDRARARLREIDASLSESFEEIALSPNDIDVAEKEQKRREAVEQEKIWYKSILKLNELHESYEKLLKEAEERLVRIYESAEKNAAAVAEEEAAEVEVNEEVVSILQQAAENPLDRVDLSGRKLKLLPEAFGKIQGLLVLNLYNNQLQAIPDSIAGLHNLLELDVSTNFLETLPDSIGLLSKLKILNVSCNKLTTLPDSICHCGSLVVLDASYNNLTYLPTNIGFELVKLEKLLIHLNKIRSLPTSIGEMRSLRYLDAHFNELNGLPNSFGLLTNLEYLNLSSNFSDLQDLPASFGDLISLQELDLSNNQIHSLPDAFGTLVNLTKLNLDQNPLVVPPDEVVKQGVDAVKMYMGKRWVSMLEEEEKMANMKDEMDQTNTDWLTRTTSKLKTYVTEVSEYLGSNPPRDPYLDQQL.

Residues 24–48 (TAKSSSSSDVEPPPSKSDPSSSSNH) form a disordered region. Positions 143 to 193 (KSILKLNELHESYEKLLKEAEERLVRIYESAEKNAAAVAEEEAAEVEVNEE) form a coiled coil. LRR repeat units lie at residues 203–225 (ENPL…AFGK), 226–249 (IQGL…IAGL), 251–272 (NLLE…IGLL), 273–295 (SKLK…ICHC), 297–319 (SLVV…GFEL), 320–342 (VKLE…IGEM), 344–364 (SLRY…SFGL), 365–389 (LTNL…SFGD), 390–412 (LISL…AFGT), and 414–436 (VNLT…VVKQ). The GVYW signature appears at 437–449 (GVDAVKMYMGKRW).

It belongs to the SHOC2 family. As to expression, widely expressed.

Leucine-rich repeat protein that likely mediates protein interactions, possibly in the context of signal transduction. PIRL1 acts redundantly with PIRL9 in the differentiation of microspores into pollen. The sequence is that of Plant intracellular Ras-group-related LRR protein 1 (PIRL1) from Arabidopsis thaliana (Mouse-ear cress).